A 358-amino-acid polypeptide reads, in one-letter code: NADH-quinone oxidoreductase subunit H (358 aa).

A run of 8 helical transmembrane segments spans residues 20–40 (ITVG…IPLI), 95–115 (ALFY…WAVI), 128–148 (IGLL…IIAG), 168–188 (ISYE…SGSM), 206–226 (VFSW…ISAV), 253–273 (GFAF…ISAL), 290–310 (WGFI…AVLY), and 334–354 (VLIP…ISPL).

This sequence belongs to the complex I subunit 1 family. As to quaternary structure, NDH-1 is composed of 14 different subunits. Subunits NuoA, H, J, K, L, M, N constitute the membrane sector of the complex.

Its subcellular location is the cell inner membrane. The enzyme catalyses a quinone + NADH + 5 H(+)(in) = a quinol + NAD(+) + 4 H(+)(out). NDH-1 shuttles electrons from NADH, via FMN and iron-sulfur (Fe-S) centers, to quinones in the respiratory chain. The immediate electron acceptor for the enzyme in this species is believed to be ubiquinone. Couples the redox reaction to proton translocation (for every two electrons transferred, four hydrogen ions are translocated across the cytoplasmic membrane), and thus conserves the redox energy in a proton gradient. This subunit may bind ubiquinone. The polypeptide is NADH-quinone oxidoreductase subunit H (Neisseria meningitidis serogroup C (strain 053442)).